The chain runs to 1027 residues: Transient-receptor-potential-like protein (1027 aa).

Residues 1-22 (MTKEGMLSAAGRRFSRCAPSPR) are disordered. ANK repeat units lie at residues 85–115 (MGRT…RIGN), 117–141 (LLCA…ITRE), and 163–192 (SDIS…SIEK). 6 helical membrane-spanning segments follow: residues 355-375 (FFLY…YILM), 391-411 (FFYY…ATFE), 473-493 (FLMI…YYIF), 516-536 (VAEA…IYLF), 559-579 (FCFI…QLYW), and 640-660 (MFIM…IAMM). Disordered stretches follow at residues 825–929 (KRDI…TYTS) and 1008–1027 (ENVK…NVEK). The span at 855 to 874 (EESEEDDKSDETSSTDEEAD) shows a compositional bias: acidic residues. Basic and acidic residues predominate over residues 910–923 (RASEADSKLPDRPL). Residues 1008-1017 (ENVKSPSPAS) are compositionally biased toward polar residues.

This sequence belongs to the transient receptor (TC 1.A.4) family. STrpC subfamily.

It is found in the membrane. In terms of biological role, could mediate calcium entry and form a calcium permeant channel. This Caenorhabditis elegans protein is Transient-receptor-potential-like protein (trp-1).